Reading from the N-terminus, the 256-residue chain is Nuclear shuttle protein (256 aa).

Residues 18-39 (NTTNRFPIRRKYVGGHTRPSVR) carry the Bipartite nuclear localization signal motif. The Nuclear localization signal motif lies at 81–96 (SRGPSGDGRSRDYIKL). The interval 150–187 (ELFGAYSACYVNLRLLNNQQHRYRVLHSVKRFVSSAGD) is interaction with Arabidopsis thaliana NSI protein.

This sequence belongs to the begomovirus nuclear shuttle protein family. In terms of assembly, binds to single-stranded and double-stranded viral DNA. Interacts with the host nuclear shuttle interacting (NSI) protein. This interaction may allow NSP to recruit NSI monomers to the viral genome and thus regulate nuclear export of viral genome by NSP.

It localises to the host nucleus. It is found in the host cytoplasm. Its subcellular location is the host cell membrane. Binds to the genomic viral ssDNA, shuttles it into and out of the cell nucleus. Begomoviruses use 2 proteins to transport their DNA from cell to cell. The nuclear shuttle protein (NSP) shuttles it between nucleus and cytoplasm and the movement protein (MP) probably transports the DNA-NSP complex to the cell periphery and facilitates movement across the cell wall. The polypeptide is Nuclear shuttle protein (Hewittia sublobata (Coralbush)).